The following is a 297-amino-acid chain: Probable endonuclease 4 (297 aa).

The Zn(2+) site is built by H69, H110, E145, D179, H182, H214, D227, H229, and E259.

This sequence belongs to the AP endonuclease 2 family. The cofactor is Zn(2+).

The catalysed reaction is Endonucleolytic cleavage to 5'-phosphooligonucleotide end-products.. In terms of biological role, endonuclease IV plays a role in DNA repair. It cleaves phosphodiester bonds at apurinic or apyrimidinic (AP) sites, generating a 3'-hydroxyl group and a 5'-terminal sugar phosphate. The chain is Probable endonuclease 4 from Oceanobacillus iheyensis (strain DSM 14371 / CIP 107618 / JCM 11309 / KCTC 3954 / HTE831).